The following is a 288-amino-acid chain: 4-diphosphocytidyl-2-C-methyl-D-erythritol kinase (288 aa).

The active site involves Lys-8. ATP is bound at residue 92–102 (PVAAGMAGGST). Residue Asp-134 is part of the active site.

This sequence belongs to the GHMP kinase family. IspE subfamily.

The catalysed reaction is 4-CDP-2-C-methyl-D-erythritol + ATP = 4-CDP-2-C-methyl-D-erythritol 2-phosphate + ADP + H(+). It functions in the pathway isoprenoid biosynthesis; isopentenyl diphosphate biosynthesis via DXP pathway; isopentenyl diphosphate from 1-deoxy-D-xylulose 5-phosphate: step 3/6. Catalyzes the phosphorylation of the position 2 hydroxy group of 4-diphosphocytidyl-2C-methyl-D-erythritol. This Clostridium perfringens (strain 13 / Type A) protein is 4-diphosphocytidyl-2-C-methyl-D-erythritol kinase.